We begin with the raw amino-acid sequence, 266 residues long: uncharacterized protein (266 aa).

The region spanning 35 to 131 (VLVGEGVLVK…WMLHIERCVT (97 aa)) is the PH domain. An FYVE-type zinc finger spans residues 152–212 (DGEAVKCMVC…VCDHCFDSLS (61 aa)). Cys-158, Cys-161, Cys-175, Cys-178, Cys-183, Cys-186, Cys-204, and Cys-207 together coordinate Zn(2+). Residues 213–266 (SATPGQEESEPKTGNRLHHEDSSSDSEDEVNGSGRSSNESRPTFYREDVQQPAT) are disordered. Basic and acidic residues-rich tracts occupy residues 221–234 (SEPK…HEDS) and 256–266 (FYREDVQQPAT).

This is an uncharacterized protein from Caenorhabditis elegans.